A 568-amino-acid chain; its full sequence is Methyl-accepting chemotaxis protein CtpH (568 aa).

At 1-39 the chain is on the cytoplasmic side; that stretch reads MPASPGHRDVLGCLVAACVPVQPGNPSRRSMLQQSLRAQ. A helical transmembrane segment spans residues 40–60; it reads ILVLLGGSLAALLLIALACFG. Topologically, residues 61-216 are periplasmic; sequence SLTGDVRAYR…ISAEARRTML (156 aa). The chain crosses the membrane as a helical span at residues 217–237; it reads LGSLVLIGASLAVALLSLWLV. Residues 238–568 are Cytoplasmic-facing; that stretch reads NRNLVRPVQR…LGDALQRLRA (331 aa). The HAMP domain maps to 239 to 291; sequence RNLVRPVQRLIEHIAQLSHGDFGERIEIRRKDELGKLALAANTLRDFLVDIFD. A Methyl-accepting transducer domain is found at 296-532; that stretch reads STRDLDSASG…EISRNLTEIA (237 aa).

It belongs to the methyl-accepting chemotaxis (MCP) protein family.

The protein resides in the cell inner membrane. Chemotactic-signal transducers respond to changes in the concentration of attractants and repellents in the environment, transduce a signal from the outside to the inside of the cell, and facilitate sensory adaptation through the variation of the level of methylation. Chemoreceptor for inorganic phosphate, which is required for taxis at high concentrations of phosphate. Recognizes inorganic phosphate directly. Can also bind to other components that have a pyrophosphate group, including ATP and ADP. This is Methyl-accepting chemotaxis protein CtpH from Pseudomonas aeruginosa (strain ATCC 15692 / DSM 22644 / CIP 104116 / JCM 14847 / LMG 12228 / 1C / PRS 101 / PAO1).